A 453-amino-acid polypeptide reads, in one-letter code: Homogentisate 1,2-dioxygenase (453 aa).

His306 functions as the Proton acceptor in the catalytic mechanism. 2 residues coordinate Fe cation: His349 and Glu355. Homogentisate contacts are provided by Tyr364 and His385. His385 is a binding site for Fe cation.

It belongs to the homogentisate dioxygenase family. In terms of assembly, hexamer; dimer of trimers. It depends on Fe cation as a cofactor.

The catalysed reaction is homogentisate + O2 = 4-maleylacetoacetate + H(+). It functions in the pathway amino-acid degradation; L-phenylalanine degradation; acetoacetate and fumarate from L-phenylalanine: step 4/6. Involved in the catabolism of homogentisate (2,5-dihydroxyphenylacetate or 2,5-OH-PhAc), a central intermediate in the degradation of phenylalanine and tyrosine. Catalyzes the oxidative ring cleavage of the aromatic ring of homogentisate to yield maleylacetoacetate. The polypeptide is Homogentisate 1,2-dioxygenase (Rhizobium rhizogenes (strain K84 / ATCC BAA-868) (Agrobacterium radiobacter)).